The primary structure comprises 145 residues: Photosystem I reaction center subunit XI (145 aa).

Transmembrane regions (helical) follow at residues 48-68 (LEIG…LGPL), 75-95 (LLVG…ALTI), and 125-145 (IGAL…SFFA).

The protein belongs to the PsaL family.

The protein resides in the plastid. Its subcellular location is the chloroplast thylakoid membrane. The chain is Photosystem I reaction center subunit XI from Isochrysis galbana (Marine planktonic alga).